Reading from the N-terminus, the 424-residue chain is Tyrosine--tRNA ligase (424 aa).

Y37 is an L-tyrosine binding site. The short motif at 42–51 (PTADSLHLGH) is the 'HIGH' region element. K144 is subject to N6-acetyllysine. Residues Y175 and Q179 each contribute to the L-tyrosine site. A 'KMSKS' region motif is present at residues 235–239 (KFGKT). An ATP-binding site is contributed by K238. Positions 357–414 (ADLMQALVDSELQPSRGQARKTIASNAITINGEKQSDPEYFFKEEDRLFGRFTLLRRG) constitute an S4 RNA-binding domain.

This sequence belongs to the class-I aminoacyl-tRNA synthetase family. TyrS type 1 subfamily. As to quaternary structure, homodimer.

The protein resides in the cytoplasm. The enzyme catalyses tRNA(Tyr) + L-tyrosine + ATP = L-tyrosyl-tRNA(Tyr) + AMP + diphosphate + H(+). Catalyzes the attachment of tyrosine to tRNA(Tyr) in a two-step reaction: tyrosine is first activated by ATP to form Tyr-AMP and then transferred to the acceptor end of tRNA(Tyr). In Escherichia coli (strain K12 / DH10B), this protein is Tyrosine--tRNA ligase.